The sequence spans 245 residues: MGKRILVQRRGRGGSQFRSPSWRREGPVRYPPLGTAGRGYVVDIIHVPGLNAPVAKIRLENGLEFLNYAAEGLYVGQEIEIGEAASPKTGNVVVLGKAPEGTMVFNVEKRPGDGGKFARSGGTYAVVVGQKPEENKTIVRLPSGRTMEVDARGRATVGLVAGGGRIEKPMVKAGKKYYRARAKAWKYPLVRGKAMSPYAHPHGGGSHQKGGTPVSKTAPPGQKVGFIGSRCTGRGCVRARAQQKQ.

The segment at 196–226 (SPYAHPHGGGSHQKGGTPVSKTAPPGQKVGF) is disordered.

This sequence belongs to the universal ribosomal protein uL2 family. As to quaternary structure, part of the 50S ribosomal subunit. Forms a bridge to the 30S subunit in the 70S ribosome.

Functionally, one of the primary rRNA binding proteins. Required for association of the 30S and 50S subunits to form the 70S ribosome, for tRNA binding and peptide bond formation. It has been suggested to have peptidyltransferase activity; this is somewhat controversial. Makes several contacts with the 16S rRNA in the 70S ribosome. This is Large ribosomal subunit protein uL2 from Pyrobaculum neutrophilum (strain DSM 2338 / JCM 9278 / NBRC 100436 / V24Sta) (Thermoproteus neutrophilus).